The primary structure comprises 114 residues: Somatostatin-1A (114 aa).

The N-terminal stretch at 1-24 is a signal peptide; it reads MLSTRIQCALALLSLALAVCSVSA. The propeptide occupies 25 to 88; that stretch reads APTDAKLRQL…KDEVRLELER (64 aa). The cysteines at positions 103 and 114 are disulfide-linked.

It belongs to the somatostatin family.

Its subcellular location is the secreted. Functionally, somatostatin inhibits the release of somatotropin. This is Somatostatin-1A (sst1a) from Carassius auratus (Goldfish).